The following is a 312-amino-acid chain: MDGGNQSEGSEFLLLGMSESPEQQRILFWMFLSMYLVTVVGNVLIILAISSDSCLHTPMYFFLANLSFTDLFFVTNTIPKMLVNLQSQNKAISYAGCLTQLYFLVSLVALDNLILAVMAYDRYVAICCPLHYTTAMSPKLCILLLSLCWVLSVLYGLIHTLLMTRVTFCGSRKIHYIFCEMYVLLRMACSNIQTNHTVLIATGCFIFLIPFGFVIISYVLIIRAILRIPSLSKKYKAFSTCASHLGAVSLFYGTLCMVYLKPLHTYSVKDSVATVMYAVVTPMMNPFIYSLRNKDMHGALGRLLDKHFKRLT.

The Extracellular segment spans residues methionine 1–arginine 25. N-linked (GlcNAc...) asparagine glycosylation is present at asparagine 5. Residues isoleucine 26–isoleucine 49 form a helical membrane-spanning segment. Residues serine 50–threonine 57 are Cytoplasmic-facing. Residues proline 58–proline 79 form a helical membrane-spanning segment. The Extracellular portion of the chain corresponds to lysine 80 to glutamine 100. Cysteine 97 and cysteine 189 are disulfide-bonded. The chain crosses the membrane as a helical span at residues leucine 101–tyrosine 120. At aspartate 121 to lysine 139 the chain is on the cytoplasmic side. A helical transmembrane segment spans residues leucine 140 to isoleucine 158. Over histidine 159–histidine 196 the chain is Extracellular. N-linked (GlcNAc...) asparagine glycosylation occurs at asparagine 195. The helical transmembrane segment at threonine 197–valine 219 threads the bilayer. Topologically, residues leucine 220–lysine 236 are cytoplasmic. Residues alanine 237–tyrosine 259 traverse the membrane as a helical segment. Residues leucine 260–serine 271 are Extracellular-facing. A helical transmembrane segment spans residues valine 272–leucine 291. The Cytoplasmic portion of the chain corresponds to arginine 292–threonine 312.

The protein belongs to the G-protein coupled receptor 1 family.

The protein resides in the cell membrane. Functionally, odorant receptor. This Pan troglodytes (Chimpanzee) protein is Olfactory receptor 1D2 (OR1D2).